Consider the following 346-residue polypeptide: Phosphate acyltransferase (346 aa).

Belongs to the PlsX family. Homodimer. Probably interacts with PlsY.

The protein resides in the cytoplasm. It carries out the reaction a fatty acyl-[ACP] + phosphate = an acyl phosphate + holo-[ACP]. It functions in the pathway lipid metabolism; phospholipid metabolism. Its function is as follows. Catalyzes the reversible formation of acyl-phosphate (acyl-PO(4)) from acyl-[acyl-carrier-protein] (acyl-ACP). This enzyme utilizes acyl-ACP as fatty acyl donor, but not acyl-CoA. This is Phosphate acyltransferase from Pelobacter propionicus (strain DSM 2379 / NBRC 103807 / OttBd1).